The primary structure comprises 366 residues: S-adenosylmethionine:tRNA ribosyltransferase-isomerase (366 aa).

This sequence belongs to the QueA family. In terms of assembly, monomer.

It localises to the cytoplasm. It catalyses the reaction 7-aminomethyl-7-carbaguanosine(34) in tRNA + S-adenosyl-L-methionine = epoxyqueuosine(34) in tRNA + adenine + L-methionine + 2 H(+). It functions in the pathway tRNA modification; tRNA-queuosine biosynthesis. Its function is as follows. Transfers and isomerizes the ribose moiety from AdoMet to the 7-aminomethyl group of 7-deazaguanine (preQ1-tRNA) to give epoxyqueuosine (oQ-tRNA). In Synechococcus sp. (strain CC9605), this protein is S-adenosylmethionine:tRNA ribosyltransferase-isomerase.